Here is a 365-residue protein sequence, read N- to C-terminus: DNA replication and repair protein RecF (365 aa).

ATP is bound at residue 30–37 (GQNGSGKT).

This sequence belongs to the RecF family.

It localises to the cytoplasm. Functionally, the RecF protein is involved in DNA metabolism; it is required for DNA replication and normal SOS inducibility. RecF binds preferentially to single-stranded, linear DNA. It also seems to bind ATP. This Shewanella woodyi (strain ATCC 51908 / MS32) protein is DNA replication and repair protein RecF.